A 968-amino-acid chain; its full sequence is RNA polymerase-associated protein RapA (968 aa).

The Helicase ATP-binding domain maps to 164 to 334; sequence EVGQRHAPRV…FARLRLLDPN (171 aa). Residue 177–184 participates in ATP binding; sequence DEVGLGKT. Positions 280-283 match the DEAH box motif; the sequence is DEAH. Residues 493 to 644 form the Helicase C-terminal domain; the sequence is WLVDFLLDLR…TCPTGRALYD (152 aa).

It belongs to the SNF2/RAD54 helicase family. RapA subfamily. As to quaternary structure, interacts with the RNAP. Has a higher affinity for the core RNAP than for the holoenzyme. Its ATPase activity is stimulated by binding to RNAP.

In terms of biological role, transcription regulator that activates transcription by stimulating RNA polymerase (RNAP) recycling in case of stress conditions such as supercoiled DNA or high salt concentrations. Probably acts by releasing the RNAP, when it is trapped or immobilized on tightly supercoiled DNA. Does not activate transcription on linear DNA. Probably not involved in DNA repair. This is RNA polymerase-associated protein RapA from Sodalis glossinidius (strain morsitans).